Consider the following 194-residue polypeptide: RNA polymerase II subunit A C-terminal domain phosphatase SSU72 like protein 4 (194 aa).

Belongs to the SSU72 phosphatase family.

Its subcellular location is the nucleus. The catalysed reaction is O-phospho-L-seryl-[protein] + H2O = L-seryl-[protein] + phosphate. It catalyses the reaction O-phospho-L-threonyl-[protein] + H2O = L-threonyl-[protein] + phosphate. Functionally, protein phosphatase that catalyzes the dephosphorylation of the C-terminal domain of RNA polymerase II. Plays a role in RNA processing and termination. In Homo sapiens (Human), this protein is RNA polymerase II subunit A C-terminal domain phosphatase SSU72 like protein 4.